The primary structure comprises 184 residues: Adenine phosphoribosyltransferase (184 aa).

Belongs to the purine/pyrimidine phosphoribosyltransferase family. As to quaternary structure, homodimer.

The protein localises to the cytoplasm. The enzyme catalyses AMP + diphosphate = 5-phospho-alpha-D-ribose 1-diphosphate + adenine. It participates in purine metabolism; AMP biosynthesis via salvage pathway; AMP from adenine: step 1/1. In terms of biological role, catalyzes a salvage reaction resulting in the formation of AMP, that is energically less costly than de novo synthesis. The protein is Adenine phosphoribosyltransferase of Acidovorax sp. (strain JS42).